The primary structure comprises 495 residues: Putative aldehyde dehydrogenase AldA (495 aa).

Glycine 212 to glycine 218 provides a ligand contact to NAD(+). Catalysis depends on residues glutamate 256 and cysteine 290.

This sequence belongs to the aldehyde dehydrogenase family.

The catalysed reaction is an aldehyde + NAD(+) + H2O = a carboxylate + NADH + 2 H(+). The polypeptide is Putative aldehyde dehydrogenase AldA (aldA) (Staphylococcus aureus (strain USA300)).